Reading from the N-terminus, the 1419-residue chain is Myosin-2B (1419 aa).

Residues 4 to 57 (EVGTRCWYPNSEAGWIGCEVTKNDFQDGTYHIELTSETGLVIPIETKHLESNNA) form the Myosin N-terminal SH3-like domain. Positions 75-780 (EATHDLTTLS…VLAYLEKIRS (706 aa)) constitute a Myosin motor domain. Residue 169–176 (GESGAGKT) participates in ATP binding. An actin-binding region spans residues 451–531 (FIGVLDIYGF…LGILSLLDEE (81 aa)). IQ domains follow at residues 783–805 (VTEL…LYLQ), 806–830 (AMLS…DFEM), 831–854 (KTDA…VFET), 855–878 (LKNI…QREF), 879–901 (ESRS…RYQT), and 902–931 (LKTG…QAES). Positions 909 to 940 (IQALVRRKQSQEKLKQLKIQAESAASLKNSAA) form a coiled coil. Positions 1061 to 1419 (KDNERTSTSS…VIKELGSLLA (359 aa)) are non alpha-helical, tail domain. In terms of domain architecture, Dilute spans 1143 to 1357 (HSILKQTVQD…LNHLSNTARR (215 aa)).

The protein belongs to the TRAFAC class myosin-kinesin ATPase superfamily. Myosin family. In terms of assembly, homodimer. Interacts with calmodulin (CMD1) and the myosin light chain MLC1 through its IQ repeats.

Functionally, myosin heavy chain that is required for the cell cycle-regulated transport of various organelles and proteins for their segregation. Functions by binding with its tail domain to receptor proteins on organelles and exerting force with its N-terminal motor domain against actin filaments, thereby transporting its cargo along polarized actin cables. In Naumovozyma castellii (Yeast), this protein is Myosin-2B (MYO2B).